The sequence spans 147 residues: Large ribosomal subunit protein uL13 (147 aa).

Residues 128–147 (PEHPHSAQQPVPYELKQVAQ) form a disordered region.

It belongs to the universal ribosomal protein uL13 family. Part of the 50S ribosomal subunit.

In terms of biological role, this protein is one of the early assembly proteins of the 50S ribosomal subunit, although it is not seen to bind rRNA by itself. It is important during the early stages of 50S assembly. This chain is Large ribosomal subunit protein uL13, found in Mycobacterium bovis (strain BCG / Pasteur 1173P2).